The following is a 177-amino-acid chain: Eggshell protein (177 aa).

The N-terminal stretch at 1–18 is a signal peptide; that stretch reads MKQSLTLVFLVAIGYATA. Tandem repeats lie at residues 25-41, 42-59, 60-75, 76-91, and 92-112. The interval 25 to 112 is 5 X approximate tandem repeats; it reads YSGGYGGGCY…GCSGGNCGGG (88 aa). Residues 149–166 show a composition bias toward gly residues; the sequence is GSGKGKGGGKGGKGGKGG. The tract at residues 149-177 is disordered; that stretch reads GSGKGKGGGKGGKGGKGGTYKPSHYGGGY.

This chain is Eggshell protein (F10), found in Schistosoma mansoni (Blood fluke).